The chain runs to 319 residues: Large ribosomal subunit protein eL8 (319 aa).

Lys87 carries the N6-acetyllysine modification. Residue Lys101 forms a Glycyl lysine isopeptide (Lys-Gly) (interchain with G-Cter in SUMO2) linkage. Lys150 carries the post-translational modification N6-acetyllysine; alternate. A Glycyl lysine isopeptide (Lys-Gly) (interchain with G-Cter in SUMO2); alternate cross-link involves residue Lys150. Lys178 participates in a covalent cross-link: Glycyl lysine isopeptide (Lys-Gly) (interchain with G-Cter in SUMO2). Lys270 is modified (N6-acetyllysine). A Glycyl lysine isopeptide (Lys-Gly) (interchain with G-Cter in SUMO2) cross-link involves residue Lys298.

Belongs to the eukaryotic ribosomal protein eL8 family. As to quaternary structure, component of the large ribosomal subunit. Interacts with CRY1. Interacts with DICER1, AGO2, TARBP2, MOV10 and EIF6; they form a large RNA-induced silencing complex (RISC).

Its subcellular location is the cytoplasm. Its function is as follows. Component of the large ribosomal subunit. The ribosome is a large ribonucleoprotein complex responsible for the synthesis of proteins in the cell. This chain is Large ribosomal subunit protein eL8 (RPL7A), found in Oryctolagus cuniculus (Rabbit).